The following is a 140-amino-acid chain: Callisulfakinin (140 aa).

The signal sequence occupies residues 1 to 30; sequence MYSQQRIFNSKYFIFFIAVLSIFWLPTMSA. Residues 31–109 constitute a propeptide that is removed on maturation; it reads RNLENSKNEN…LEYEDEDRSK (79 aa). The residue at position 114 (Tyr114) is a Sulfotyrosine. Residue Phe119 is modified to Phenylalanine amide. Position 131 is a sulfotyrosine (Tyr131). The residue at position 136 (Phe136) is a Phenylalanine amide. Residues 139 to 140 constitute a propeptide that is removed on maturation; the sequence is SI.

It belongs to the gastrin/cholecystokinin family. In brain, it is specifically expressed in four pairs of neurons. Not expressed in other cells of the brain and in the thoracico-abdominal ganglion.

It is found in the secreted. Callisulfakinin I is a neuropeptide. The existence of Callisulfakinin II is uncertain. This chain is Callisulfakinin, found in Calliphora vomitoria (Blue bottle fly).